Here is a 299-residue protein sequence, read N- to C-terminus: Ankyrin repeat domain-containing protein 54 (299 aa).

Residues 1–27 form a disordered region; sequence MAATGGGADDESRSGRSSSDGECAVAP. Ala-2 is subject to N-acetylalanine. Ser-62 carries the phosphoserine modification. The Nuclear localization signal (NLS) signature appears at 98–116; the sequence is RRLGPTGKEVHALKRLRDS. 4 ANK repeats span residues 108 to 137, 141 to 170, 174 to 203, and 207 to 239; these read HALK…DPCA, KGRT…DPNQ, LGNT…RVDA, and AGRT…EVKQ. An LYN-binding region spans residues 140 to 240; it reads DKGRTALHFA…EAVRLEVKQI (101 aa). Residues 282 to 292 carry the Nuclear export signal (NES) motif; the sequence is LLASFTSLSLQ.

In terms of assembly, interacts (via ankyrin repeat region) with LYN (via SH3-domain) in an activation-independent status of LYN. Forms a multiprotein complex with LYN and HCLS1. Interacts with TSN2, VAV1, DBNL and LASP1. Expressed in a variety of hemopoietic cell lines and tissue with high levels in testis. Highly expressed in ciliated cells.

It is found in the nucleus. The protein resides in the cytoplasm. The protein localises to the midbody. Its function is as follows. Plays an important role in regulating intracellular signaling events associated with erythroid terminal differentiation. In Mus musculus (Mouse), this protein is Ankyrin repeat domain-containing protein 54 (Ankrd54).